We begin with the raw amino-acid sequence, 626 residues long: Threonine--tRNA ligase (626 aa).

The tract at residues 1–144 (MRMLLIHADY…LSRTIVPEEG (144 aa)) is editing domain. Positions 207–506 (PHVRLMLEHE…QAQGKKPMFP (300 aa)) are catalytic. Residues Cys299, His351, and His475 each contribute to the Zn(2+) site.

It belongs to the class-II aminoacyl-tRNA synthetase family. In terms of assembly, homodimer. It depends on Zn(2+) as a cofactor.

The protein localises to the cytoplasm. The enzyme catalyses tRNA(Thr) + L-threonine + ATP = L-threonyl-tRNA(Thr) + AMP + diphosphate + H(+). Functionally, catalyzes the attachment of threonine to tRNA(Thr) in a two-step reaction: L-threonine is first activated by ATP to form Thr-AMP and then transferred to the acceptor end of tRNA(Thr). Also edits incorrectly charged L-seryl-tRNA(Thr). The sequence is that of Threonine--tRNA ligase from Thermococcus gammatolerans (strain DSM 15229 / JCM 11827 / EJ3).